Reading from the N-terminus, the 1217-residue chain is Sterol 3-beta-glucosyltransferase (1217 aa).

A GRAM 1 domain is found at 195–232; it reads EFVRKYFGISEEETLIGHYTGWLLQEVLIQGNLFITNS. The region spanning 246–343 is the PH domain; that stretch reads AVVLCGKLKL…WVKCLKKQLF (98 aa). In terms of domain architecture, GRAM 2 spans 590 to 656; sequence AKIKDWFNLH…EDIEGYNEIL (67 aa). UDP-alpha-D-glucose is bound by residues Ser766, Arg767, Asp769, Asn1042, Ile1072, His1074, His1087, Ser1090, Gly1091, Thr1092, Asp1111, and Gln1112.

This sequence belongs to the glycosyltransferase 28 family.

It localises to the cytoplasm. The protein resides in the membrane. The enzyme catalyses a sterol + UDP-alpha-D-glucose = a sterol 3-beta-D-glucoside + UDP + H(+). The catalysed reaction is ergosterol + UDP-alpha-D-glucose = ergosteryl 3-beta-D-glucoside + UDP + H(+). Its function is as follows. Sterol glycosyltransferase responsible for the glycosylation of ergosterol to form ergosterol-glucoside. This Vanderwaltozyma polyspora (strain ATCC 22028 / DSM 70294 / BCRC 21397 / CBS 2163 / NBRC 10782 / NRRL Y-8283 / UCD 57-17) (Kluyveromyces polysporus) protein is Sterol 3-beta-glucosyltransferase.